A 404-amino-acid polypeptide reads, in one-letter code: CCA-adding enzyme (404 aa).

Residues Gly27 and Arg30 each contribute to the ATP site. 2 residues coordinate CTP: Gly27 and Arg30. Mg(2+) is bound by residues Asp40 and Asp42. ATP contacts are provided by Arg111, Asp154, Arg157, Arg160, and Arg163. Residues Arg111, Asp154, Arg157, Arg160, and Arg163 each coordinate CTP.

Belongs to the tRNA nucleotidyltransferase/poly(A) polymerase family. Bacterial CCA-adding enzyme type 3 subfamily. In terms of assembly, homodimer. Requires Mg(2+) as cofactor.

It carries out the reaction a tRNA precursor + 2 CTP + ATP = a tRNA with a 3' CCA end + 3 diphosphate. It catalyses the reaction a tRNA with a 3' CCA end + 2 CTP + ATP = a tRNA with a 3' CCACCA end + 3 diphosphate. Catalyzes the addition and repair of the essential 3'-terminal CCA sequence in tRNAs without using a nucleic acid template. Adds these three nucleotides in the order of C, C, and A to the tRNA nucleotide-73, using CTP and ATP as substrates and producing inorganic pyrophosphate. tRNA 3'-terminal CCA addition is required both for tRNA processing and repair. Also involved in tRNA surveillance by mediating tandem CCA addition to generate a CCACCA at the 3' terminus of unstable tRNAs. While stable tRNAs receive only 3'-terminal CCA, unstable tRNAs are marked with CCACCA and rapidly degraded. The protein is CCA-adding enzyme of Geobacillus thermodenitrificans (strain NG80-2).